Reading from the N-terminus, the 420-residue chain is F420-non-reducing hydrogenase vhu subunit A (420 aa).

The Ni(2+) site is built by Cys61 and Cys64.

This sequence belongs to the [NiFe]/[NiFeSe] hydrogenase large subunit family. In terms of assembly, the F420-non-reducing hydrogenase vhu is composed of four subunits; VhuA, VhuD, VhuG and VhuU. The cofactor is Ni(2+).

The protein is F420-non-reducing hydrogenase vhu subunit A (vhuA) of Methanococcus voltae.